We begin with the raw amino-acid sequence, 376 residues long: Ribosomal RNA large subunit methyltransferase G (376 aa).

Belongs to the methyltransferase superfamily. RlmG family.

It localises to the cytoplasm. It catalyses the reaction guanosine(1835) in 23S rRNA + S-adenosyl-L-methionine = N(2)-methylguanosine(1835) in 23S rRNA + S-adenosyl-L-homocysteine + H(+). Its function is as follows. Specifically methylates the guanine in position 1835 (m2G1835) of 23S rRNA. This Klebsiella pneumoniae (strain 342) protein is Ribosomal RNA large subunit methyltransferase G.